The following is a 96-amino-acid chain: Cell division protein FtsB (96 aa).

At 1–11 (MDIKSNSFFYI) the chain is on the cytoplasmic side. The helical transmembrane segment at 12–29 (FISVVLLLIAILQYDLWF) threads the bilayer. Residues 30–96 (SNTGFIKYQA…KQGEVFYSVK (67 aa)) are Periplasmic-facing.

It belongs to the FtsB family. As to quaternary structure, part of a complex composed of FtsB, FtsL and FtsQ.

It localises to the cell inner membrane. Functionally, essential cell division protein. May link together the upstream cell division proteins, which are predominantly cytoplasmic, with the downstream cell division proteins, which are predominantly periplasmic. The sequence is that of Cell division protein FtsB from Francisella tularensis subsp. tularensis (strain SCHU S4 / Schu 4).